Reading from the N-terminus, the 123-residue chain is ATP synthase epsilon chain (123 aa).

This sequence belongs to the ATPase epsilon chain family. As to quaternary structure, F-type ATPases have 2 components, CF(1) - the catalytic core - and CF(0) - the membrane proton channel. CF(1) has five subunits: alpha(3), beta(3), gamma(1), delta(1), epsilon(1). CF(0) has three main subunits: a, b and c.

It localises to the cell inner membrane. Functionally, produces ATP from ADP in the presence of a proton gradient across the membrane. In Helicobacter pylori (strain HPAG1), this protein is ATP synthase epsilon chain.